The chain runs to 295 residues: 3-methyl-2-oxobutanoate hydroxymethyltransferase (295 aa).

Residues Asp53 and Asp92 each coordinate Mg(2+). Residues 53–54, Asp92, and Lys122 each bind 3-methyl-2-oxobutanoate; that span reads DS. Glu124 contacts Mg(2+). The active-site Proton acceptor is the Glu191.

Belongs to the PanB family. In terms of assembly, homodecamer; pentamer of dimers. The cofactor is Mg(2+).

The protein resides in the cytoplasm. The catalysed reaction is 3-methyl-2-oxobutanoate + (6R)-5,10-methylene-5,6,7,8-tetrahydrofolate + H2O = 2-dehydropantoate + (6S)-5,6,7,8-tetrahydrofolate. Its pathway is cofactor biosynthesis; (R)-pantothenate biosynthesis; (R)-pantoate from 3-methyl-2-oxobutanoate: step 1/2. In terms of biological role, catalyzes the reversible reaction in which hydroxymethyl group from 5,10-methylenetetrahydrofolate is transferred onto alpha-ketoisovalerate to form ketopantoate. In Koribacter versatilis (strain Ellin345), this protein is 3-methyl-2-oxobutanoate hydroxymethyltransferase.